A 351-amino-acid polypeptide reads, in one-letter code: Neutral protease 2 homolog MGG_10927 (351 aa).

Residues 1–16 (MKFSIGVSLLATLAGA) form the signal peptide. Residues 17 to 177 (VNVDMAKRDT…AAFLAKRTIV (161 aa)) constitute a propeptide that is removed on maturation. 2 cysteine pairs are disulfide-bonded: Cys-181–Cys-253 and Cys-260–Cys-278. Residue His-303 participates in Zn(2+) binding. Glu-304 is an active-site residue. His-307 is a binding site for Zn(2+).

It belongs to the peptidase M35 family. The cofactor is Zn(2+).

The protein resides in the secreted. It catalyses the reaction Preferential cleavage of bonds with hydrophobic residues in P1'. Also 3-Asn-|-Gln-4 and 8-Gly-|-Ser-9 bonds in insulin B chain.. In terms of biological role, secreted metalloproteinase that allows assimilation of proteinaceous substrates. Shows high activities on basic nuclear substrates such as histone and protamine. This chain is Neutral protease 2 homolog MGG_10927, found in Colletotrichum graminicola (strain M1.001 / M2 / FGSC 10212) (Maize anthracnose fungus).